The following is a 264-amino-acid chain: MATKNPTKIEMRDLLQAGAHFGHQTRFWNPKMGPYIFGARNKIHIINLEHTVKAFNEALTYVNGLAAKKNKVLFVGTKRAASGVIAEQAARAGMPYVDHRWLGGMLTNWKTLRQSINRLKELEKQAEDGTFAKLTKREALERTRDMEKLERSLGGIKDMGGLPDAIFVVDVDHEAIAIKEAKNLGIPVIGIVDTNSNPDNVDYIIPANDDAIRAVTLYVTSMADAIIAGKEYAQTQAGGKAEQEAPATEEAADAQTEEAATPAE.

Positions 233-264 (AQTQAGGKAEQEAPATEEAADAQTEEAATPAE) are disordered.

Belongs to the universal ribosomal protein uS2 family.

The sequence is that of Small ribosomal subunit protein uS2 from Psychrobacter arcticus (strain DSM 17307 / VKM B-2377 / 273-4).